Reading from the N-terminus, the 271-residue chain is Regulatory protein RecX (271 aa).

This sequence belongs to the RecX family.

The protein resides in the cytoplasm. Its function is as follows. Modulates RecA activity. The protein is Regulatory protein RecX of Geobacillus sp. (strain WCH70).